We begin with the raw amino-acid sequence, 299 residues long: Nitrogenase iron protein (299 aa).

8 to 15 (GKGGIGKS) is an ATP binding site. Residue Cys96 coordinates [4Fe-4S] cluster. An ADP-ribosylarginine; by dinitrogenase reductase ADP-ribosyltransferase modification is found at Arg99. Cys130 provides a ligand contact to [4Fe-4S] cluster.

This sequence belongs to the NifH/BchL/ChlL family. Homodimer. Requires [4Fe-4S] cluster as cofactor. In terms of processing, the reversible ADP-ribosylation of Arg-99 inactivates the nitrogenase reductase and regulates nitrogenase activity.

The catalysed reaction is N2 + 8 reduced [2Fe-2S]-[ferredoxin] + 16 ATP + 16 H2O = H2 + 8 oxidized [2Fe-2S]-[ferredoxin] + 2 NH4(+) + 16 ADP + 16 phosphate + 6 H(+). Functionally, the key enzymatic reactions in nitrogen fixation are catalyzed by the nitrogenase complex, which has 2 components: the iron protein and the molybdenum-iron protein. This is Nitrogenase iron protein from Gloeothece citriformis (strain PCC 7424) (Cyanothece sp. (strain PCC 7424)).